A 741-amino-acid polypeptide reads, in one-letter code: Melanoma-associated antigen D4 (741 aa).

Residues 1 to 13 (MAEGSFSVQSESY) are compositionally biased toward polar residues. Disordered stretches follow at residues 1–27 (MAEG…EVGE), 136–206 (RVAT…EGPS), 247–296 (MAFP…KALA), and 323–379 (PEGA…QPSL). Acidic residues predominate over residues 14–27 (SVEDMDEGSDEVGE). 2 stretches are compositionally biased toward polar residues: residues 140-151 (PQVSGEDTQPTT) and 187-196 (TSAQSQTGSP). A compositionally biased stretch (acidic residues) spans 354–363 (DEYESSEEER). An MAGE domain is found at 413 to 611 (LQERANKLVK…REWKAHFLEA (199 aa)). Residues 700 to 720 (VSSGTNGGASTSVLDGPSTSS) form a disordered region. Residues 701-720 (SSGTNGGASTSVLDGPSTSS) are compositionally biased toward polar residues.

Interacts with TRIM27. Expressed only in brain and ovary among normal tissues. Isoform 1 and isoform 2 are specifically expressed in glioma cells among cancer cells. Detected in some renal cell carcinoma samples.

In terms of biological role, may enhance ubiquitin ligase activity of RING-type zinc finger-containing E3 ubiquitin-protein ligases. Proposed to act through recruitment and/or stabilization of the Ubl-conjugating enzyme (E2) at the E3:substrate complex. The sequence is that of Melanoma-associated antigen D4 (MAGED4) from Homo sapiens (Human).